A 100-amino-acid chain; its full sequence is Urease subunit gamma (100 aa).

It belongs to the urease gamma subunit family. In terms of assembly, heterotrimer of UreA (gamma), UreB (beta) and UreC (alpha) subunits. Three heterotrimers associate to form the active enzyme.

The protein localises to the cytoplasm. It carries out the reaction urea + 2 H2O + H(+) = hydrogencarbonate + 2 NH4(+). Its pathway is nitrogen metabolism; urea degradation; CO(2) and NH(3) from urea (urease route): step 1/1. The sequence is that of Urease subunit gamma from Nocardia farcinica (strain IFM 10152).